Here is a 275-residue protein sequence, read N- to C-terminus: Shikimate dehydrogenase (NADP(+)) (275 aa).

Residues 15-17 (SKS) and threonine 62 each bind shikimate. Lysine 66 functions as the Proton acceptor in the catalytic mechanism. Glutamate 78 contacts NADP(+). 2 residues coordinate shikimate: asparagine 87 and aspartate 102. NADP(+)-binding positions include 128 to 132 (GAGGA), 151 to 156 (NRTAEK), and leucine 218. Residue tyrosine 220 participates in shikimate binding. NADP(+) is bound at residue glycine 241.

It belongs to the shikimate dehydrogenase family. Homodimer.

The catalysed reaction is shikimate + NADP(+) = 3-dehydroshikimate + NADPH + H(+). It participates in metabolic intermediate biosynthesis; chorismate biosynthesis; chorismate from D-erythrose 4-phosphate and phosphoenolpyruvate: step 4/7. In terms of biological role, involved in the biosynthesis of the chorismate, which leads to the biosynthesis of aromatic amino acids. Catalyzes the reversible NADPH linked reduction of 3-dehydroshikimate (DHSA) to yield shikimate (SA). This chain is Shikimate dehydrogenase (NADP(+)), found in Shouchella clausii (strain KSM-K16) (Alkalihalobacillus clausii).